Reading from the N-terminus, the 289-residue chain is Ribosomal RNA small subunit methyltransferase A (289 aa).

The S-adenosyl-L-methionine site is built by Asn-21, Leu-23, Gly-48, Glu-69, Asp-94, and Asn-120.

Belongs to the class I-like SAM-binding methyltransferase superfamily. rRNA adenine N(6)-methyltransferase family. RsmA subfamily.

It is found in the cytoplasm. The catalysed reaction is adenosine(1518)/adenosine(1519) in 16S rRNA + 4 S-adenosyl-L-methionine = N(6)-dimethyladenosine(1518)/N(6)-dimethyladenosine(1519) in 16S rRNA + 4 S-adenosyl-L-homocysteine + 4 H(+). Specifically dimethylates two adjacent adenosines (A1518 and A1519) in the loop of a conserved hairpin near the 3'-end of 16S rRNA in the 30S particle. May play a critical role in biogenesis of 30S subunits. This chain is Ribosomal RNA small subunit methyltransferase A, found in Actinobacillus pleuropneumoniae serotype 7 (strain AP76).